We begin with the raw amino-acid sequence, 139 residues long: Large-conductance mechanosensitive channel (139 aa).

The next 2 helical transmembrane spans lie at 19-39 (VAVI…ADVI) and 81-101 (GNFL…FMVV).

Belongs to the MscL family. Homopentamer.

The protein resides in the cell inner membrane. Its function is as follows. Channel that opens in response to stretch forces in the membrane lipid bilayer. May participate in the regulation of osmotic pressure changes within the cell. This Nitrobacter hamburgensis (strain DSM 10229 / NCIMB 13809 / X14) protein is Large-conductance mechanosensitive channel.